Reading from the N-terminus, the 222-residue chain is 3-demethoxyubiquinol 3-hydroxylase (222 aa).

Residues glutamate 71, glutamate 101, histidine 104, glutamate 153, glutamate 185, and histidine 188 each contribute to the Fe cation site.

The protein belongs to the COQ7 family. The cofactor is Fe cation.

The protein resides in the cell membrane. The enzyme catalyses a 5-methoxy-2-methyl-3-(all-trans-polyprenyl)benzene-1,4-diol + AH2 + O2 = a 3-demethylubiquinol + A + H2O. Its pathway is cofactor biosynthesis; ubiquinone biosynthesis. Functionally, catalyzes the hydroxylation of 2-nonaprenyl-3-methyl-6-methoxy-1,4-benzoquinol during ubiquinone biosynthesis. The polypeptide is 3-demethoxyubiquinol 3-hydroxylase (Bordetella pertussis (strain Tohama I / ATCC BAA-589 / NCTC 13251)).